Here is a 491-residue protein sequence, read N- to C-terminus: Xaa-Pro aminopeptidase 1 (491 aa).

The disordered stretch occupies residues M1 to P32. Mn(2+)-binding residues include D308, D320, H403, E434, and E458.

It belongs to the peptidase M24B family. As to quaternary structure, homodimer. It depends on Mn(2+) as a cofactor.

The catalysed reaction is Release of any N-terminal amino acid, including proline, that is linked to proline, even from a dipeptide or tripeptide.. The protein is Xaa-Pro aminopeptidase 1 (pepPI) of Streptomyces coelicolor (strain ATCC BAA-471 / A3(2) / M145).